The primary structure comprises 155 residues: Myosin light chain alkali (155 aa).

2 consecutive EF-hand domains span residues R7–N41 and G80–S115.

As to quaternary structure, myosin is a hexamer of 2 heavy chains and 4 light chains.

The chain is Myosin light chain alkali (Mlc1) from Drosophila simulans (Fruit fly).